The chain runs to 443 residues: Phosphoglucosamine mutase (443 aa).

The active-site Phosphoserine intermediate is the serine 100. Serine 100, aspartate 240, aspartate 242, and aspartate 244 together coordinate Mg(2+). Serine 100 bears the Phosphoserine mark.

Belongs to the phosphohexose mutase family. The cofactor is Mg(2+). Post-translationally, activated by phosphorylation.

It catalyses the reaction alpha-D-glucosamine 1-phosphate = D-glucosamine 6-phosphate. Catalyzes the conversion of glucosamine-6-phosphate to glucosamine-1-phosphate. This is Phosphoglucosamine mutase from Carboxydothermus hydrogenoformans (strain ATCC BAA-161 / DSM 6008 / Z-2901).